The sequence spans 102 residues: Vacuolar ATPase assembly integral membrane protein VMA21 (102 aa).

At 1-30 (MERYDKATLNAAFAPEFRQNEGSLTSTLRT) the chain is on the cytoplasmic side. Residues 31–51 (LLFFTALMITLPVGLYFSSKA) traverse the membrane as a helical segment. At 52–66 (YIFEGTLGMSNRDSY) the chain is on the lumenal side. The helical transmembrane segment at 67 to 87 (FYAAIVAVVTVHVVLAMFVYV) threads the bilayer. Residues 88–102 (AWSEGTRQWREGKQD) are Cytoplasmic-facing.

This sequence belongs to the VMA21 family. As to quaternary structure, associates with the V0 complex of the vacuolar ATPase (V-ATPase). Interacts with ATP6AP2.

Its subcellular location is the endoplasmic reticulum membrane. It is found in the endoplasmic reticulum-Golgi intermediate compartment membrane. The protein resides in the cytoplasmic vesicle. It localises to the COPII-coated vesicle membrane. Its function is as follows. Required for the assembly of the V0 complex of the vacuolar ATPase (V-ATPase) in the endoplasmic reticulum. The polypeptide is Vacuolar ATPase assembly integral membrane protein VMA21 (Gallus gallus (Chicken)).